A 294-amino-acid chain; its full sequence is ATP synthase gamma chain (294 aa).

The protein belongs to the ATPase gamma chain family. F-type ATPases have 2 components, CF(1) - the catalytic core - and CF(0) - the membrane proton channel. CF(1) has five subunits: alpha(3), beta(3), gamma(1), delta(1), epsilon(1). CF(0) has three main subunits: a, b and c.

The protein localises to the cell inner membrane. Produces ATP from ADP in the presence of a proton gradient across the membrane. The gamma chain is believed to be important in regulating ATPase activity and the flow of protons through the CF(0) complex. The protein is ATP synthase gamma chain of Mesorhizobium japonicum (strain LMG 29417 / CECT 9101 / MAFF 303099) (Mesorhizobium loti (strain MAFF 303099)).